Reading from the N-terminus, the 1703-residue chain is Mediator of RNA polymerase II transcription subunit 14 (1703 aa).

Residues 755 to 766 (LSQTADLATSSA) show a composition bias toward polar residues. The interval 755-781 (LSQTADLATSSAGPLLRKDQKPRKRSA) is disordered.

The protein belongs to the Mediator complex subunit 14 family. In terms of assembly, component of the Mediator complex. Interacts with CDKE-1, HDA19 and LUG. Interacts with PTAC12/HMR/PAP5 and PIF4. Expressed in roots, stems, developing embryos, young leaf primordia, shoot apical meristems, inflorescence meristems, tapetum in anthers, ovules and floral organ primordia, but not in mature organs.

The protein resides in the nucleus. Its function is as follows. Component of the Mediator complex, a coactivator involved in the regulated transcription of nearly all RNA polymerase II-dependent genes. Mediator functions as a bridge to convey information from gene-specific regulatory proteins to the basal RNA polymerase II transcription machinery. The Mediator complex, having a compact conformation in its free form, is recruited to promoters by direct interactions with regulatory proteins and serves for the assembly of a functional pre-initiation complex with RNA polymerase II and the general transcription factors. Binds to G-box (5'-CACGTG-3')-containing regions of target genes promoters (e.g. IAA29 and IAA19). Involved in defining the duration of cell proliferation. Element of a PIF4/HMR/MED14-dependent thermoresponsive process; required for thermomorphogenetic hypocotyl growth in response to daytime warm temperature elicitation by associating to the promoters of thermoresponsive growth-relevant genes (e.g. mainly involved in biosynthesis and signaling of the phytohormone auxin); this also process implies PIF4 and its transcriptional coactivator PTAC12/HMR/PAP5 to promote the expression of target genes. In Arabidopsis thaliana (Mouse-ear cress), this protein is Mediator of RNA polymerase II transcription subunit 14.